A 65-amino-acid chain; its full sequence is Crotamine CRO1 (65 aa).

Positions 1–22 are cleaved as a signal peptide; it reads MKILYLLFAFLFLAFLSEPGNA. 3 disulfides stabilise this stretch: cysteine 26–cysteine 58, cysteine 33–cysteine 52, and cysteine 40–cysteine 59.

This sequence belongs to the crotamine-myotoxin family. In terms of assembly, monomer. In terms of tissue distribution, expressed by the venom gland.

The protein resides in the secreted. Functionally, cationic peptide that possesses multiple functions. It acts as a cell-penetrating peptide (CPP), and as a potent voltage-gated potassium channel (Kv) inhibitor. It exhibits antimicrobial activities, hind limb paralysis, and severe muscle necrosis by a non-enzymatic mechanism. This Crotalus durissus terrificus (South American rattlesnake) protein is Crotamine CRO1 (CRO1).